The primary structure comprises 98 residues: HssA/B-like protein 50 (98 aa).

2 disordered regions span residues methionine 1–serine 26 and threonine 68–isoleucine 98. Positions glycine 84–isoleucine 98 are enriched in gly residues.

This sequence belongs to the hssA/B family.

In Dictyostelium discoideum (Social amoeba), this protein is HssA/B-like protein 50 (hssl50).